Reading from the N-terminus, the 593-residue chain is Copine-5 (593 aa).

The 133-residue stretch at 2-134 folds into the C2 1 domain; the sequence is EQPEDMASLS…SPGSRLEKPL (133 aa). Residue S19 is modified to Phosphoserine. Residues D38, D44, D98, D100, S103, K108, and D110 each coordinate Ca(2+). At S103 the chain carries Phosphoserine. S140 is modified (phosphoserine). A C2 2 domain is found at 161 to 284; the sequence is KCGTIILSAE…ARGQSQFNIY (124 aa). Residues D192, D198, D254, D256, and D262 each contribute to the Ca(2+) site. The region spanning 328–554 is the VWFA domain; that stretch reads NFTVAIDFTA…DVLAEIPDQL (227 aa). Residues 562–593 are disordered; the sequence is GIRPRPPPAAPTHSPSQSPARTPPASPLHTHI. Over residues 572-581 the composition is skewed to low complexity; that stretch reads PTHSPSQSPA.

This sequence belongs to the copine family. It depends on Ca(2+) as a cofactor. In terms of tissue distribution, expressed in the brain, heart, stomach, spleen, lymph node and testis. Expressed in melanocytes.

It localises to the perikaryon. The protein resides in the cell projection. Probable calcium-dependent phospholipid-binding protein that may play a role in calcium-mediated intracellular processes. Plays a role in dendrite formation by melanocytes. This is Copine-5 from Homo sapiens (Human).